The chain runs to 137 residues: Basic phospholipase A2 homolog Bsc-K49 (137 aa).

The N-terminal stretch at 1 to 16 (MRTLWIVAVLLVGVEG) is a signal peptide. 7 cysteine pairs are disulfide-bonded: Cys-42–Cys-131, Cys-44–Cys-60, Cys-59–Cys-111, Cys-65–Cys-137, Cys-66–Cys-104, Cys-73–Cys-97, and Cys-91–Cys-102. Residues 121–133 (KNYKITMKMFCKK) are important for membrane-damaging activities in eukaryotes and bacteria; heparin-binding.

This sequence belongs to the phospholipase A2 family. Group II subfamily. K49 sub-subfamily. Homodimer; non-covalently linked. In terms of tissue distribution, expressed by the venom gland.

It is found in the secreted. Snake venom phospholipase A2 that lacks enzymatic activity. Is myotoxic, and displays edema-inducing activities. A model of myotoxic mechanism has been proposed: an apo Lys49-PLA2 is activated by the entrance of a hydrophobic molecule (e.g. fatty acid) at the hydrophobic channel of the protein leading to a reorientation of a monomer. This reorientation causes a transition between 'inactive' to 'active' states, causing alignment of C-terminal and membrane-docking sites (MDoS) side-by-side and putting the membrane-disruption sites (MDiS) in the same plane, exposed to solvent and in a symmetric position for both monomers. The MDoS region stabilizes the toxin on membrane by the interaction of charged residues with phospholipid head groups. Subsequently, the MDiS region destabilizes the membrane with penetration of hydrophobic residues. This insertion causes a disorganization of the membrane, allowing an uncontrolled influx of ions (i.e. calcium and sodium), and eventually triggering irreversible intracellular alterations and cell death. This chain is Basic phospholipase A2 homolog Bsc-K49, found in Bothriechis schlegelii (Eyelash palm pitviper).